Reading from the N-terminus, the 94-residue chain is Integration host factor subunit beta (94 aa).

The protein belongs to the bacterial histone-like protein family. In terms of assembly, heterodimer of an alpha and a beta chain.

Its function is as follows. This protein is one of the two subunits of integration host factor, a specific DNA-binding protein that functions in genetic recombination as well as in transcriptional and translational control. This is Integration host factor subunit beta from Nitrosospira multiformis (strain ATCC 25196 / NCIMB 11849 / C 71).